Reading from the N-terminus, the 499-residue chain is Dual specificity protein kinase CLK2 (499 aa).

The interval 1–67 (MPHPRRYHSS…SYDDRSSDRR (67 aa)) is disordered. Over residues 8 to 21 (HSSERGSRGSYREH) the composition is skewed to basic and acidic residues. The span at 22–33 (YRSRKHKRRRSR) shows a compositional bias: basic residues. Serine 34 bears the Phosphoserine; by PKB/AKT1 mark. The span at 47–67 (REDSYHVRSRSSYDDRSSDRR) shows a compositional bias: basic and acidic residues. At serine 98 the chain carries Phosphoserine. Phosphotyrosine; by autocatalysis is present on tyrosine 99. Residues 101 to 143 (YQRENSSYRSQRSSRRKHRRRRRRSRTFSRSSSQHSSRRAKSV) form a disordered region. Basic residues predominate over residues 112–127 (RSSRRKHRRRRRRSRT). Position 127 is a phosphothreonine; by PKB/AKT1 (threonine 127). At serine 142 the chain carries Phosphoserine; by autocatalysis. Phosphotyrosine is present on tyrosine 153. Positions 163–479 (YEIVSTLGEG…LGEALQHPFF (317 aa)) constitute a Protein kinase domain. ATP-binding positions include 169–177 (LGEGTFGRV) and lysine 193. Aspartate 290 acts as the Proton acceptor in catalysis. Threonine 344 carries the phosphothreonine; by PKB/AKT2 modification.

The protein belongs to the protein kinase superfamily. CMGC Ser/Thr protein kinase family. Lammer subfamily. Interacts with RBMX. Interacts with AKT1 and UBL5. In terms of processing, autophosphorylates on all three types of residues. Phosphorylation on Ser-34 and Thr-127 by AKT1 is induced by ionizing radiation or insulin. Phosphorylation plays a critical role in cell proliferation following low dose radiation and prevents cell death following high dose radiation. Phosphorylation at Thr-344 by PKB/AKT2 induces its kinase activity which is required for its stability. The phosphorylation status at Ser-142 influences its subnuclear localization; inhibition of phosphorylation at Ser-142 results in accumulation in the nuclear speckle. In terms of tissue distribution, endothelial cells. Expressed in androgen-dependent prostate cancer cells.

It localises to the nucleus. Its subcellular location is the nucleus speckle. The enzyme catalyses L-seryl-[protein] + ATP = O-phospho-L-seryl-[protein] + ADP + H(+). The catalysed reaction is L-threonyl-[protein] + ATP = O-phospho-L-threonyl-[protein] + ADP + H(+). It carries out the reaction L-tyrosyl-[protein] + ATP = O-phospho-L-tyrosyl-[protein] + ADP + H(+). With respect to regulation, 5,6-dichloro-1-b-D-ribofuranosylbenzimidazole (DRB) inhibits autophosphorylation. TG003 inhibits its kinase activity and affects the regulation of alternative splicing mediated by phosphorylation of SR proteins. Its function is as follows. Dual specificity kinase acting on both serine/threonine and tyrosine-containing substrates. Phosphorylates serine- and arginine-rich (SR) proteins of the spliceosomal complex. May be a constituent of a network of regulatory mechanisms that enable SR proteins to control RNA splicing and can cause redistribution of SR proteins from speckles to a diffuse nucleoplasmic distribution. Acts as a suppressor of hepatic gluconeogenesis and glucose output by repressing PPARGC1A transcriptional activity on gluconeogenic genes via its phosphorylation. Phosphorylates PPP2R5B thereby stimulating the assembly of PP2A phosphatase with the PPP2R5B-AKT1 complex leading to dephosphorylation of AKT1. Phosphorylates: PTPN1, SRSF1 and SRSF3. Regulates the alternative splicing of tissue factor (F3) pre-mRNA in endothelial cells. Phosphorylates PAGE4 at several serine and threonine residues and this phosphorylation attenuates the ability of PAGE4 to potentiate the transcriptional activator activity of JUN. The protein is Dual specificity protein kinase CLK2 (CLK2) of Homo sapiens (Human).